The following is a 329-amino-acid chain: Synaptonemal complex central element protein 1 (329 aa).

The segment at 1-29 (MATRPQPLGMEPEGSADLLHGPEGARGQY) is disordered. 2 coiled-coil regions span residues 54–167 (RIEV…LETL) and 194–294 (KEQL…ILAH). The tract at residues 291–329 (ILAHSTQNEEDSSWRMASPKPVEVHEETAQDQERPSSRT) is disordered. Over residues 312-329 (VEVHEETAQDQERPSSRT) the composition is skewed to basic and acidic residues.

The protein belongs to the SYCE family. As to quaternary structure, homodimer. Found in a complex with SYCP1 and SYCE2. Interacts with SYCP1, SYCE2 and SYCE3. Interacts with SIX6OS1. As to expression, meiotic cells (at protein level). Expressed in the ovary and testis.

Its subcellular location is the nucleus. The protein resides in the chromosome. Functionally, major component of the transverse central element of synaptonemal complexes (SCS), formed between homologous chromosomes during meiotic prophase. Requires SYCP1 in order to be incorporated into the central element. May have a role in the synaptonemal complex assembly, stabilization and recombination. The protein is Synaptonemal complex central element protein 1 (Syce1) of Mus musculus (Mouse).